We begin with the raw amino-acid sequence, 105 residues long: Dynein axonemal light chain 4 (105 aa).

This sequence belongs to the dynein light chain family. As to quaternary structure, consists of at least two heavy chains and a number of intermediate and light chains.

It localises to the cytoplasm. It is found in the cytoskeleton. The protein localises to the cilium axoneme. Functionally, force generating protein of respiratory cilia. Produces force towards the minus ends of microtubules. Dynein has ATPase activity. This is Dynein axonemal light chain 4 (DNAL4) from Bos taurus (Bovine).